The following is an 84-amino-acid chain: Cytochrome b559 subunit alpha (84 aa).

A helical transmembrane segment spans residues 24–38 (IIHAVTLPAIFIAGF). His-26 is a heme binding site.

It belongs to the PsbE/PsbF family. As to quaternary structure, heterodimer of an alpha subunit and a beta subunit. PSII is composed of 1 copy each of membrane proteins PsbA, PsbB, PsbC, PsbD, PsbE, PsbF, PsbH, PsbI, PsbJ, PsbK, PsbL, PsbM, PsbT, PsbX, PsbY, Psb30/Ycf12, peripheral proteins PsbO, CyanoQ (PsbQ), PsbU, PsbV and a large number of cofactors. It forms dimeric complexes. It depends on heme b as a cofactor.

It localises to the cellular thylakoid membrane. Functionally, this b-type cytochrome is tightly associated with the reaction center of photosystem II (PSII). PSII is a light-driven water:plastoquinone oxidoreductase that uses light energy to abstract electrons from H(2)O, generating O(2) and a proton gradient subsequently used for ATP formation. It consists of a core antenna complex that captures photons, and an electron transfer chain that converts photonic excitation into a charge separation. This chain is Cytochrome b559 subunit alpha, found in Prochlorococcus marinus subsp. pastoris (strain CCMP1986 / NIES-2087 / MED4).